Reading from the N-terminus, the 366-residue chain is Ribosomal RNA large subunit methyltransferase M (366 aa).

S-adenosyl-L-methionine contacts are provided by residues Ser188, 221-224, Asp240, Asp260, and Asp277; that span reads CPGG. Lys306 (proton acceptor) is an active-site residue.

Belongs to the class I-like SAM-binding methyltransferase superfamily. RNA methyltransferase RlmE family. RlmM subfamily. In terms of assembly, monomer.

The protein resides in the cytoplasm. It carries out the reaction cytidine(2498) in 23S rRNA + S-adenosyl-L-methionine = 2'-O-methylcytidine(2498) in 23S rRNA + S-adenosyl-L-homocysteine + H(+). In terms of biological role, catalyzes the 2'-O-methylation at nucleotide C2498 in 23S rRNA. This chain is Ribosomal RNA large subunit methyltransferase M, found in Klebsiella pneumoniae (strain 342).